A 275-amino-acid chain; its full sequence is uncharacterized protein (275 aa).

Positions 75 to 157 form a coiled coil; the sequence is AKELIKNRRL…AELKQAAEQG (83 aa).

This is an uncharacterized protein from Bacillus subtilis (strain 168).